Reading from the N-terminus, the 440-residue chain is WAS/WASL-interacting protein family member 2 (440 aa).

The span at 1–18 (MPIPPPPPPPPGPPPPPT) shows a compositional bias: pro residues. A disordered region spans residues 1–38 (MPIPPPPPPPPGPPPPPTFNQANTEQPKLSRDEQRNRG). Residues 36–53 (NRGALLQDICKGTKLKKV) enclose the WH2 domain. Asymmetric dimethylarginine is present on Arg-37. A binds actin region spans residues 49–52 (KLKK). Disordered stretches follow at residues 56-386 (VNDR…RDSI) and 419-440 (RVYP…PILR). A compositionally biased stretch (low complexity) spans 116 to 132 (PSSRAAAPRPPGSAASG). Pro residues-rich tracts occupy residues 176–193 (APPP…PTPL), 225–236 (PAPPPVKPPPSP), 249–262 (APPP…PGVP), and 356–378 (RGKP…PPPL).

Belongs to the verprolin family. Interacts with WASL and WASP, and this interaction results in cytoplasmic relocation of these two proteins along actin filaments. Interacts with NCK2 resulting in the localization to sites of focal adhesions.

The protein localises to the cytoplasm. It localises to the cytoskeleton. Functionally, plays an active role in the formation of cell surface protrusions downstream of activated PDGFB receptors. Plays an important role in actin-microspike formation through cooperation with WASL. May cooperate with WASP and WASL to induce mobilization and reorganization of the actin filament system. The sequence is that of WAS/WASL-interacting protein family member 2 (Wipf2) from Mus musculus (Mouse).